A 170-amino-acid chain; its full sequence is Probable host range protein 2 (170 aa).

A disordered region spans residues 145–170 (SDSDSDVDDRAELHKRNNDSDSDDYT). Over residues 152–163 (DDRAELHKRNND) the composition is skewed to basic and acidic residues.

The protein belongs to the poxviridae C7 protein family.

Plays a role for multiplication of the virus in different cell types. The chain is Probable host range protein 2 from Bos taurus (Bovine).